Reading from the N-terminus, the 343-residue chain is DNA repair and recombination protein RadA (343 aa).

Position 107–114 (107–114 (GEFGAGKS)) interacts with ATP.

The protein belongs to the eukaryotic RecA-like protein family.

Its function is as follows. Involved in DNA repair and in homologous recombination. Binds and assemble on single-stranded DNA to form a nucleoprotein filament. Hydrolyzes ATP in a ssDNA-dependent manner and promotes DNA strand exchange between homologous DNA molecules. This Halobacterium salinarum (strain ATCC 29341 / DSM 671 / R1) protein is DNA repair and recombination protein RadA.